The primary structure comprises 62 residues: Sperm histone P2a (62 aa).

The protein belongs to the protamine P2 family. In terms of processing, proteolytic processing into mature chains is required for histone eviction during spermatogenesis. Transition proteins (TNP1 and TNP2) are required for processing. As to expression, testis.

The protein localises to the nucleus. Its subcellular location is the chromosome. Protamines substitute for histones in the chromatin of sperm during the haploid phase of spermatogenesis. They compact sperm DNA into a highly condensed, stable and inactive complex. This Equus caballus (Horse) protein is Sperm histone P2a.